Consider the following 139-residue polypeptide: Large-conductance mechanosensitive channel (139 aa).

3 consecutive transmembrane segments (helical) span residues 10 to 30 (FAVKGNVVDLAVAVIVGAAFG), 40 to 60 (VIMPVVGKIFGGLDFSNYYIA), and 80 to 100 (LAYGNFITIALNFIILAFIIF).

The protein belongs to the MscL family. Homopentamer.

It localises to the cell inner membrane. Channel that opens in response to stretch forces in the membrane lipid bilayer. May participate in the regulation of osmotic pressure changes within the cell. The chain is Large-conductance mechanosensitive channel from Janthinobacterium sp. (strain Marseille) (Minibacterium massiliensis).